A 161-amino-acid polypeptide reads, in one-letter code: Assembly protein P7 (161 aa).

As to quaternary structure, homodimer. Part of the packaging complex composed of RDRP, P4 and P7. Interacts with RDRP.

The protein localises to the virion. Its function is as follows. Assembly protein part of the packaging complex that packages the viral RNA segments, replicate them into a double-stranded form and transcribe them. Required for efficient procapsid assembly. Necessary for stable packaging. May stabilize the RNA-dependent RNA polymerase (RdRP) in its position at the three-fold axis on the inner side of empty-unexpanded procapsids. Could play a role in viral RNA recognition. Seems to be involved in the regulation of plus strand synthesis (transcription) as a fidelity factor. This Pseudomonas phage phi6 (Bacteriophage phi-6) protein is Assembly protein P7 (P7).